The sequence spans 249 residues: Cis-4-hydroxycyclohexanecarboxylate dehydrogenase (249 aa).

NAD(+)-binding residues include D38, D63, V64, N90, Y156, K160, A189, and T191. Y156 serves as the catalytic Proton acceptor.

This sequence belongs to the short-chain dehydrogenases/reductases (SDR) family. As to quaternary structure, homotetramer.

It carries out the reaction cis-4-hydroxycyclohexane-1-carboxylate + NAD(+) = 4-oxocyclohexane-1-carboxylate + NADH + H(+). Its function is as follows. Dehydrogenase involved in a cyclohexanecarboxylate (CHCA) degradation pathway. Catalyzes the NAD(+)-dependent dehydrogenation of cis-4-hydroxycyclohexanecarboxylate (cis-4-hydroxyCHCA) to form 4-oxocyclohexanecarboxylate (4-oxoCHCA). Is highly specific for the cis-4-hydroxy derivative and shows only weak activity with trans-4-hydroxyCHCA. Cannot use NADP(+). The protein is Cis-4-hydroxycyclohexanecarboxylate dehydrogenase of Sinomonas cyclohexanicum (Corynebacterium cyclohexanicum).